Here is a 302-residue protein sequence, read N- to C-terminus: Probable alpha-L-glutamate ligase (302 aa).

In terms of domain architecture, ATP-grasp spans 112 to 294 (LQLLLKAGIP…IAAEIIDYIE (183 aa)). ATP is bound by residues Lys-148, 185–186 (DF), Asp-194, and 218–220 (RAN). Mg(2+)-binding residues include Asp-255, Glu-267, and Asn-269. Asp-255, Glu-267, and Asn-269 together coordinate Mn(2+).

It belongs to the RimK family. Requires Mg(2+) as cofactor. Mn(2+) is required as a cofactor.

In Haemophilus influenzae (strain ATCC 51907 / DSM 11121 / KW20 / Rd), this protein is Probable alpha-L-glutamate ligase.